The primary structure comprises 199 residues: dTTP/UTP pyrophosphatase (199 aa).

Asp73 serves as the catalytic Proton acceptor.

It belongs to the Maf family. YhdE subfamily. The cofactor is a divalent metal cation.

Its subcellular location is the cytoplasm. The catalysed reaction is dTTP + H2O = dTMP + diphosphate + H(+). It carries out the reaction UTP + H2O = UMP + diphosphate + H(+). Its function is as follows. Nucleoside triphosphate pyrophosphatase that hydrolyzes dTTP and UTP. May have a dual role in cell division arrest and in preventing the incorporation of modified nucleotides into cellular nucleic acids. The chain is dTTP/UTP pyrophosphatase from Caldicellulosiruptor saccharolyticus (strain ATCC 43494 / DSM 8903 / Tp8T 6331).